The sequence spans 244 residues: MASTDDNKPPTASDFAKDAEPQFDPTARTRNWFSILLGTMPPSHQILYREDQYARHEKRDCDKCEEWRDYNLKYSPIVIFMQKNIRDLNGKLDADNIRCRRCPTRITEDGKMVRQGGGFSPEHGIQLCANEMRDSKHVEDTLAHEMVHAWDHLRWKVDWGDLRHAACSEIRAASLSGECRWTREFWTRNNYRVTQQHQECVRRRAVKSVLARPWCKDDVQAVKVVNEVWDSCYSDTRPFDEIYK.

The segment at methionine 1–glutamine 22 is disordered. Position 144 (histidine 144) interacts with a divalent metal cation. Glutamate 145 is an active-site residue. Residue histidine 148 participates in a divalent metal cation binding.

The protein belongs to the peptidase M76 family.

Its subcellular location is the mitochondrion inner membrane. Functionally, has a dual role in the assembly of mitochondrial ATPase. Acts as a protease that removes N-terminal residues of mitochondrial ATPase CF(0) subunit 6 at the intermembrane space side. Also involved in the correct assembly of the membrane-embedded ATPase CF(0) particle, probably mediating association of subunit 6 with the subunit 9 ring. This chain is Mitochondrial inner membrane protease atp23 (atp23), found in Sclerotinia sclerotiorum (strain ATCC 18683 / 1980 / Ss-1) (White mold).